The sequence spans 759 residues: GTPase-activating protein rrc-1 (759 aa).

The SH3 domain occupies 164-243 (PAIAAAVVTK…PRDCVMLIDD (80 aa)). The 194-residue stretch at 280 to 473 (LELTDLYMRT…FFIENSESLF (194 aa)) folds into the Rho-GAP domain. The segment at 591-624 (ARSMRPTSRPPPSPRTRRARFSNGSSNNVQKLNE) is disordered. A compositionally biased stretch (polar residues) spans 612–622 (SNGSSNNVQKL).

In terms of tissue distribution, expressed in coelomocytes, excretory cells, uterine-seam cells and GLR cells.

Functionally, functions as a GTPase-activating protein (GAP) for ced-10/rac-1 and CDC42. The polypeptide is GTPase-activating protein rrc-1 (rrc-1) (Caenorhabditis elegans).